The primary structure comprises 101 residues: Urease subunit beta (101 aa).

Belongs to the urease beta subunit family. As to quaternary structure, heterotrimer of UreA (gamma), UreB (beta) and UreC (alpha) subunits. Three heterotrimers associate to form the active enzyme.

It is found in the cytoplasm. It carries out the reaction urea + 2 H2O + H(+) = hydrogencarbonate + 2 NH4(+). It participates in nitrogen metabolism; urea degradation; CO(2) and NH(3) from urea (urease route): step 1/1. The sequence is that of Urease subunit beta from Pseudomonas paraeruginosa (strain DSM 24068 / PA7) (Pseudomonas aeruginosa (strain PA7)).